The sequence spans 120 residues: Ribosome-binding factor A (120 aa).

Belongs to the RbfA family. As to quaternary structure, monomer. Binds 30S ribosomal subunits, but not 50S ribosomal subunits or 70S ribosomes.

Its subcellular location is the cytoplasm. Functionally, one of several proteins that assist in the late maturation steps of the functional core of the 30S ribosomal subunit. Associates with free 30S ribosomal subunits (but not with 30S subunits that are part of 70S ribosomes or polysomes). Required for efficient processing of 16S rRNA. May interact with the 5'-terminal helix region of 16S rRNA. This Dictyoglomus thermophilum (strain ATCC 35947 / DSM 3960 / H-6-12) protein is Ribosome-binding factor A.